Consider the following 266-residue polypeptide: Tryptophan synthase alpha chain (266 aa).

Active-site proton acceptor residues include E46 and D57.

It belongs to the TrpA family. In terms of assembly, tetramer of two alpha and two beta chains.

The enzyme catalyses (1S,2R)-1-C-(indol-3-yl)glycerol 3-phosphate + L-serine = D-glyceraldehyde 3-phosphate + L-tryptophan + H2O. It participates in amino-acid biosynthesis; L-tryptophan biosynthesis; L-tryptophan from chorismate: step 5/5. Its function is as follows. The alpha subunit is responsible for the aldol cleavage of indoleglycerol phosphate to indole and glyceraldehyde 3-phosphate. The sequence is that of Tryptophan synthase alpha chain from Lacticaseibacillus casei (Lactobacillus casei).